Consider the following 494-residue polypeptide: Tetracenomycin biosynthesis bifunctional cyclase/O-methyl transferase TcmN (494 aa).

A polyketide cyclase region spans residues 11 to 140; the sequence is VNAPFELVWD…TTTRANMERI (130 aa). Ser67 acts as the Proton acceptor; for cyclase activity in catalysis. Catalysis depends on proton donor; for cyclase activity residues Arg69 and Arg82. Positions 169–494 are methyltransferase; it reads LLLAASGRLA…TWTTLECRPV (326 aa). S-adenosyl-L-methionine is bound by residues Asp358 and 384 to 386; that span reads GDF. The active-site Proton acceptor; for methyltransferase activity is the His405.

The protein in the C-terminal section; belongs to the class I-like SAM-binding methyltransferase superfamily. Cation-independent O-methyltransferase family. In terms of assembly, the tetracenomycin polyketide synthase (TCM PKS) is composed of a ketosynthase complex (TcmKL), an acyl carrier protein (TcmM), a cyclase (TcmN) and a probable second cyclase (TcmJ). TcmN is a homodimer in solution.

It carries out the reaction 10 malonyl-CoA + 8 H(+) = tetracenomycin F2 + 10 CO2 + 10 CoA + 2 H2O. It participates in antibiotic biosynthesis; tetracenomycin C biosynthesis. In terms of biological role, involved in the biosynthesis of tetracenomycin C (TCM C). Part of a type II polyketide synthase (PKS) that catalyzes the synthesis of tetracenomycin F2 (TCM F2), a precursor of TCM C, from malonyl-CoA. The TcmN N-terminal domain, when coupled with the other components of the PKS, catalyzes the cyclization and aromatization of the linear polyketide intermediate. Catalyzes the cyclization of the first and second rings. In addition, the C-terminal domain acts as a methyltransferase. It catalyzes the specific O-methylation of tetracenomycin D3 (TCM D3) to TCM B3, using S-adenosyl-L-methionine as the methyl donor. In Streptomyces glaucescens, this protein is Tetracenomycin biosynthesis bifunctional cyclase/O-methyl transferase TcmN.